We begin with the raw amino-acid sequence, 696 residues long: Probable transporter efuK (696 aa).

The interval S603–F642 is disordered. A compositionally biased stretch (basic and acidic residues) spans A615–N633.

It belongs to the OSBP family.

Probable transporter; part of the gene cluster that mediates the biosynthesis of enfumafungin, a glycosylated fernene-type triterpenoid with potent antifungal activity, mediated by its interaction with beta-1,3-glucan synthase and the fungal cell wall. Might be involved in transport of enfumafungin to and across organelle membranes. The sequence is that of Probable transporter efuK from Hormonema carpetanum.